Consider the following 245-residue polypeptide: PF03932 family protein CutC (245 aa).

The protein belongs to the CutC family.

Its subcellular location is the cytoplasm. This chain is PF03932 family protein CutC, found in Rhizobium meliloti (strain 1021) (Ensifer meliloti).